A 153-amino-acid chain; its full sequence is Ribonuclease 2 (153 aa).

The protein belongs to the BetVI family.

The protein resides in the cytoplasm. Catalyzes the two-stage endonucleolytic cleavage to 3'-phosphomononucleotides and 3'-phosphooligonucleotides with 2',3'-cyclic phosphate intermediates. This Panax ginseng (Korean ginseng) protein is Ribonuclease 2.